The primary structure comprises 546 residues: ATP synthase subunit alpha (546 aa).

An ATP-binding site is contributed by 173-180 (GDRQTGKT). The disordered stretch occupies residues 520 to 546 (VDKKTAPKSVTPVDQEQIKAGKAQEKK). Over residues 535 to 546 (EQIKAGKAQEKK) the composition is skewed to basic and acidic residues.

This sequence belongs to the ATPase alpha/beta chains family. In terms of assembly, F-type ATPases have 2 components, CF(1) - the catalytic core - and CF(0) - the membrane proton channel. CF(1) has five subunits: alpha(3), beta(3), gamma(1), delta(1), epsilon(1). CF(0) has three main subunits: a(1), b(2) and c(9-12). The alpha and beta chains form an alternating ring which encloses part of the gamma chain. CF(1) is attached to CF(0) by a central stalk formed by the gamma and epsilon chains, while a peripheral stalk is formed by the delta and b chains.

Its subcellular location is the cell membrane. It catalyses the reaction ATP + H2O + 4 H(+)(in) = ADP + phosphate + 5 H(+)(out). Its function is as follows. Produces ATP from ADP in the presence of a proton gradient across the membrane. The alpha chain is a regulatory subunit. This is ATP synthase subunit alpha from Bifidobacterium animalis subsp. lactis (strain AD011).